A 475-amino-acid polypeptide reads, in one-letter code: Aspartyl/glutamyl-tRNA(Asn/Gln) amidotransferase subunit B (475 aa).

The protein belongs to the GatB/GatE family. GatB subfamily. In terms of assembly, heterotrimer of A, B and C subunits.

The catalysed reaction is L-glutamyl-tRNA(Gln) + L-glutamine + ATP + H2O = L-glutaminyl-tRNA(Gln) + L-glutamate + ADP + phosphate + H(+). It carries out the reaction L-aspartyl-tRNA(Asn) + L-glutamine + ATP + H2O = L-asparaginyl-tRNA(Asn) + L-glutamate + ADP + phosphate + 2 H(+). Functionally, allows the formation of correctly charged Asn-tRNA(Asn) or Gln-tRNA(Gln) through the transamidation of misacylated Asp-tRNA(Asn) or Glu-tRNA(Gln) in organisms which lack either or both of asparaginyl-tRNA or glutaminyl-tRNA synthetases. The reaction takes place in the presence of glutamine and ATP through an activated phospho-Asp-tRNA(Asn) or phospho-Glu-tRNA(Gln). This is Aspartyl/glutamyl-tRNA(Asn/Gln) amidotransferase subunit B from Chlorobium phaeobacteroides (strain BS1).